Consider the following 172-residue polypeptide: Protein GrpE (172 aa).

Belongs to the GrpE family. In terms of assembly, homodimer.

It localises to the cytoplasm. In terms of biological role, participates actively in the response to hyperosmotic and heat shock by preventing the aggregation of stress-denatured proteins, in association with DnaK and GrpE. It is the nucleotide exchange factor for DnaK and may function as a thermosensor. Unfolded proteins bind initially to DnaJ; upon interaction with the DnaJ-bound protein, DnaK hydrolyzes its bound ATP, resulting in the formation of a stable complex. GrpE releases ADP from DnaK; ATP binding to DnaK triggers the release of the substrate protein, thus completing the reaction cycle. Several rounds of ATP-dependent interactions between DnaJ, DnaK and GrpE are required for fully efficient folding. This chain is Protein GrpE, found in Thermotoga sp. (strain RQ2).